The primary structure comprises 171 residues: NADH-quinone oxidoreductase subunit B 2 (171 aa).

[4Fe-4S] cluster contacts are provided by cysteine 37, cysteine 38, cysteine 102, and cysteine 132.

Belongs to the complex I 20 kDa subunit family. As to quaternary structure, NDH-1 is composed of 14 different subunits. Subunits NuoB, C, D, E, F, and G constitute the peripheral sector of the complex. Requires [4Fe-4S] cluster as cofactor.

The protein localises to the cell inner membrane. The catalysed reaction is a quinone + NADH + 5 H(+)(in) = a quinol + NAD(+) + 4 H(+)(out). NDH-1 shuttles electrons from NADH, via FMN and iron-sulfur (Fe-S) centers, to quinones in the respiratory chain. Couples the redox reaction to proton translocation (for every two electrons transferred, four hydrogen ions are translocated across the cytoplasmic membrane), and thus conserves the redox energy in a proton gradient. The chain is NADH-quinone oxidoreductase subunit B 2 from Chromobacterium violaceum (strain ATCC 12472 / DSM 30191 / JCM 1249 / CCUG 213 / NBRC 12614 / NCIMB 9131 / NCTC 9757 / MK).